The chain runs to 157 residues: Endoribonuclease YbeY (157 aa).

3 residues coordinate Zn(2+): His-118, His-122, and His-128.

It belongs to the endoribonuclease YbeY family. Requires Zn(2+) as cofactor.

It localises to the cytoplasm. Its function is as follows. Single strand-specific metallo-endoribonuclease involved in late-stage 70S ribosome quality control and in maturation of the 3' terminus of the 16S rRNA. In Bordetella parapertussis (strain 12822 / ATCC BAA-587 / NCTC 13253), this protein is Endoribonuclease YbeY.